A 316-amino-acid chain; its full sequence is Porphobilinogen deaminase (316 aa).

At C240 the chain carries S-(dipyrrolylmethanemethyl)cysteine.

This sequence belongs to the HMBS family. In terms of assembly, monomer. The cofactor is dipyrromethane.

The catalysed reaction is 4 porphobilinogen + H2O = hydroxymethylbilane + 4 NH4(+). The protein operates within porphyrin-containing compound metabolism; protoporphyrin-IX biosynthesis; coproporphyrinogen-III from 5-aminolevulinate: step 2/4. Tetrapolymerization of the monopyrrole PBG into the hydroxymethylbilane pre-uroporphyrinogen in several discrete steps. This is Porphobilinogen deaminase from Alkaliphilus metalliredigens (strain QYMF).